Consider the following 576-residue polypeptide: CTP synthase (576 aa).

In terms of domain architecture, Glutamine amidotransferase type-1 spans 305-559 (QIALVGKYTH…LGLVAAAANI (255 aa)). Active-site for GATase activity residues include cysteine 404, histidine 535, and glutamate 537.

This sequence belongs to the CTP synthase family.

It carries out the reaction UTP + L-glutamine + ATP + H2O = CTP + L-glutamate + ADP + phosphate + 2 H(+). The protein operates within pyrimidine metabolism; CTP biosynthesis via de novo pathway; CTP from UDP: step 2/2. In terms of biological role, catalyzes the ATP-dependent amination of UTP to CTP with either L-glutamine or ammonia as the source of nitrogen. The polypeptide is CTP synthase (URA7) (Eremothecium gossypii (strain ATCC 10895 / CBS 109.51 / FGSC 9923 / NRRL Y-1056) (Yeast)).